A 366-amino-acid polypeptide reads, in one-letter code: 1-deoxy-D-xylulose 5-phosphate reductoisomerase (366 aa).

7 residues coordinate NADPH: T7, G8, S9, I10, G31, N33, and N111. K112 contacts 1-deoxy-D-xylulose 5-phosphate. Position 113 (E113) interacts with NADPH. D131 contacts Mn(2+). 1-deoxy-D-xylulose 5-phosphate contacts are provided by S132, E133, S162, and H185. Residue E133 participates in Mn(2+) binding. G191 serves as a coordination point for NADPH. Positions 198, 203, 204, and 207 each coordinate 1-deoxy-D-xylulose 5-phosphate. E207 contributes to the Mn(2+) binding site.

The protein belongs to the DXR family. Mg(2+) serves as cofactor. Requires Mn(2+) as cofactor.

It carries out the reaction 2-C-methyl-D-erythritol 4-phosphate + NADP(+) = 1-deoxy-D-xylulose 5-phosphate + NADPH + H(+). The protein operates within isoprenoid biosynthesis; isopentenyl diphosphate biosynthesis via DXP pathway; isopentenyl diphosphate from 1-deoxy-D-xylulose 5-phosphate: step 1/6. In terms of biological role, catalyzes the NADPH-dependent rearrangement and reduction of 1-deoxy-D-xylulose-5-phosphate (DXP) to 2-C-methyl-D-erythritol 4-phosphate (MEP). The chain is 1-deoxy-D-xylulose 5-phosphate reductoisomerase from Nautilia profundicola (strain ATCC BAA-1463 / DSM 18972 / AmH).